The primary structure comprises 274 residues: Large ribosomal subunit protein uL2 (274 aa).

A disordered region spans residues 223 to 274; that stretch reads VAMNPVDHPHGGGEGRTGEGRHAVDPWGNLTKGYRTRNNKRTQSMIVSRRKK. Over residues 229-246 the composition is skewed to basic and acidic residues; the sequence is DHPHGGGEGRTGEGRHAV.

The protein belongs to the universal ribosomal protein uL2 family. As to quaternary structure, part of the 50S ribosomal subunit. Forms a bridge to the 30S subunit in the 70S ribosome.

In terms of biological role, one of the primary rRNA binding proteins. Required for association of the 30S and 50S subunits to form the 70S ribosome, for tRNA binding and peptide bond formation. It has been suggested to have peptidyltransferase activity; this is somewhat controversial. Makes several contacts with the 16S rRNA in the 70S ribosome. This chain is Large ribosomal subunit protein uL2, found in Verminephrobacter eiseniae (strain EF01-2).